Consider the following 78-residue polypeptide: MNVSNNSNMDHNDLAKRGESLIRKSTNRYLTTVRIAFRAKQRRFDDFDGLLEESAIKPVQRSIIELSDEQDQPDLLPG.

This sequence belongs to the RNA polymerase subunit omega family. As to quaternary structure, in cyanobacteria the RNAP catalytic core is composed of 2 alpha, 1 beta, 1 beta', 1 gamma and 1 omega subunit. When a sigma factor is associated with the core the holoenzyme is formed, which can initiate transcription.

The enzyme catalyses RNA(n) + a ribonucleoside 5'-triphosphate = RNA(n+1) + diphosphate. Its function is as follows. Promotes RNA polymerase assembly. Latches the N- and C-terminal regions of the beta' subunit thereby facilitating its interaction with the beta and alpha subunits. This is DNA-directed RNA polymerase subunit omega from Prochlorococcus marinus subsp. pastoris (strain CCMP1986 / NIES-2087 / MED4).